The chain runs to 162 residues: 2-C-methyl-D-erythritol 2,4-cyclodiphosphate synthase (162 aa).

Residues Asp9 and His11 each coordinate a divalent metal cation. 4-CDP-2-C-methyl-D-erythritol 2-phosphate is bound by residues 9–11 (DVH) and 35–36 (HS). Position 43 (His43) interacts with a divalent metal cation. 4-CDP-2-C-methyl-D-erythritol 2-phosphate is bound by residues 57 to 59 (DIG), 62 to 66 (FPDTD), 133 to 136 (TTTE), Phe140, and Arg143.

It belongs to the IspF family. As to quaternary structure, homotrimer. A divalent metal cation serves as cofactor.

The catalysed reaction is 4-CDP-2-C-methyl-D-erythritol 2-phosphate = 2-C-methyl-D-erythritol 2,4-cyclic diphosphate + CMP. The protein operates within isoprenoid biosynthesis; isopentenyl diphosphate biosynthesis via DXP pathway; isopentenyl diphosphate from 1-deoxy-D-xylulose 5-phosphate: step 4/6. In terms of biological role, involved in the biosynthesis of isopentenyl diphosphate (IPP) and dimethylallyl diphosphate (DMAPP), two major building blocks of isoprenoid compounds. Catalyzes the conversion of 4-diphosphocytidyl-2-C-methyl-D-erythritol 2-phosphate (CDP-ME2P) to 2-C-methyl-D-erythritol 2,4-cyclodiphosphate (ME-CPP) with a corresponding release of cytidine 5-monophosphate (CMP). The chain is 2-C-methyl-D-erythritol 2,4-cyclodiphosphate synthase from Histophilus somni (strain 129Pt) (Haemophilus somnus).